Here is a 519-residue protein sequence, read N- to C-terminus: Cobyric acid synthase (519 aa).

A GATase cobBQ-type domain is found at Trp-256–Phe-438. Catalysis depends on Cys-337, which acts as the Nucleophile. Residue His-430 is part of the active site.

The protein belongs to the CobB/CobQ family. CobQ subfamily.

Its pathway is cofactor biosynthesis; adenosylcobalamin biosynthesis. In terms of biological role, catalyzes amidations at positions B, D, E, and G on adenosylcobyrinic A,C-diamide. NH(2) groups are provided by glutamine, and one molecule of ATP is hydrogenolyzed for each amidation. This Saccharopolyspora erythraea (strain ATCC 11635 / DSM 40517 / JCM 4748 / NBRC 13426 / NCIMB 8594 / NRRL 2338) protein is Cobyric acid synthase.